The sequence spans 300 residues: Epimerase family protein SACOL0834 (300 aa).

The protein belongs to the NAD(P)-dependent epimerase/dehydratase family. SDR39U1 subfamily.

This Staphylococcus aureus (strain COL) protein is Epimerase family protein SACOL0834.